A 629-amino-acid chain; its full sequence is MSDDQQNGKQNTTTTTSTPTEQDDIEEKLFRHQLTEFYSANGTFLKNSSLESIIMESIGIQSNNNNNNNNDSVNNNSNNNINNSNYNNNNNNIGGNIGTIGSINSINSDMNDIKLGDMLNMGNVLNSGSGLQTRLKRKEILQQPTTPPISTEPTRTYDVFYDKDLDYHKTLRLFNKRLFLHCLRQKALSLKDSIQNSEESDTSSHSSIQSNDHRPLKKQKITTTIKKVKDSSPTLEESSLISKKKSPSSSSSSSSLINSPTTSKETSPVKDTKPTINPKSLFGLSSTIPLIPRVKTEKEKEKEKEIEKEKEKEKEKEKEKEKEKEKEIEKEREKEKEREREREREREREREREREREREREREKEKEKEREREREREREREREREKEFEKERREREKEREREKLNITKDKEKQVIRETTIDETLNKETPHKPTPHITTKKSPNLTPPISSTASPPSVTTYSSLIPSIPTPQSAAATTTTPSSATLTAVSATIPTPTLTPTLSSPTSTSPTTATTLASNNSTITSTTNVNNNNNNNNNNNNNNNNNNNNNNNNNNKFSTPDDFKSLNWIPFLKEDNQQVSEKELLERRMDINQSKQLLLQVINSLNQERTIIEKKLLSDFKNSNTNSSKQ.

Positions 1 to 11 are enriched in polar residues; that stretch reads MSDDQQNGKQN. Disordered regions lie at residues 1–24, 62–87, 197–464, and 493–560; these read MSDD…EQDD, SNNN…SNYN, SEES…SSLI, and PTPT…STPD. Positions 247–264 are enriched in low complexity; that stretch reads PSSSSSSSSLINSPTTSK. Residues 274-288 show a composition bias toward polar residues; it reads PTINPKSLFGLSSTI. Basic and acidic residues predominate over residues 294–430; the sequence is VKTEKEKEKE…DETLNKETPH (137 aa). Low complexity-rich tracts occupy residues 434–464 and 493–554; these read PHIT…SSLI and PTPT…NNNN.

This is an uncharacterized protein from Dictyostelium discoideum (Social amoeba).